Consider the following 308-residue polypeptide: MILKSFLLGNLLSLCMKIINSVVVVGFYYGFLTTFSIGPSYLFLLRAQVMEEETEKEISSTTGFITGQLMMFISIYYAPLHLALGRPHTITVLVLPHLLFHFFWNNHKHFLDYGSTTRNSMRNLSIQCVFLNNLIFQLFNHFILPSSTLARLVNIYLFRCNSKILFVTSSFVGWLIGHILFMKWVGLVLSWIRQNHSIRSNKYLVSELTNSMARIFSILLFITSVYYLGRMPSPIVTKKLKETSEMEERGESEEETDVEIETTSETKETKQEQEGSTEEDPSLCSEEQEDPDKLDETGRDPSEWKGNI.

The next 6 membrane-spanning stretches (helical) occupy residues Ile-18–Gly-38, Phe-64–Leu-84, Pro-87–His-107, Leu-124–Leu-144, Val-172–Ile-192, and Ile-215–Ile-235. The span at Lys-239–Arg-249 shows a compositional bias: basic and acidic residues. The tract at residues Lys-239–Ile-308 is disordered. Over residues Gly-250 to Thr-262 the composition is skewed to acidic residues. A compositionally biased stretch (basic and acidic residues) spans Ser-264–Gln-273. The span at Gly-275–Lys-293 shows a compositional bias: acidic residues. Residues Leu-294–Ile-308 are compositionally biased toward basic and acidic residues.

The protein belongs to the TIC214 family. Part of the Tic complex.

It localises to the plastid. The protein resides in the chloroplast inner membrane. Functionally, involved in protein precursor import into chloroplasts. May be part of an intermediate translocation complex acting as a protein-conducting channel at the inner envelope. This chain is Putative protein TIC 214 N-terminal part, found in Piper cenocladum (Ant piper).